Here is a 226-residue protein sequence, read N- to C-terminus: Small ribosomal subunit protein uS3 (226 aa).

Positions 39–107 (IRAYIKKNVV…EVTLNIKEVK (69 aa)) constitute a KH type-2 domain.

It belongs to the universal ribosomal protein uS3 family. Part of the 30S ribosomal subunit. Forms a tight complex with proteins S10 and S14.

Its function is as follows. Binds the lower part of the 30S subunit head. Binds mRNA in the 70S ribosome, positioning it for translation. The polypeptide is Small ribosomal subunit protein uS3 (Pelagibacter ubique (strain HTCC1062)).